A 2036-amino-acid polypeptide reads, in one-letter code: Transmembrane channel-like protein (2036 aa).

Disordered regions lie at residues 1 to 178 and 194 to 243; these read MQND…IDDE and SVRG…ESTQ. Residues 1–353 are Cytoplasmic-facing; the sequence is MQNDEEPAAA…GVASYFTFLR (353 aa). A compositionally biased stretch (low complexity) spans 58-73; that stretch reads VGSSSSNGNTSNVATG. Positions 74 to 90 are enriched in polar residues; that stretch reads ANSENNSGVTSPHQLSV. Over residues 125 to 134 the composition is skewed to basic and acidic residues; sequence ASQEDHRSYE. A compositionally biased stretch (acidic residues) spans 166-178; sequence FDEDGGGGDIDDE. A compositionally biased stretch (basic residues) spans 198 to 208; sequence YRGKRGSRSSR. Residues 216–225 are compositionally biased toward basic and acidic residues; the sequence is HVLDSVERRR. Polar residues predominate over residues 227–243; sequence SVYTTSSEEGTNQESTQ. A helical transmembrane segment spans residues 354 to 374; the sequence is WLMWVNIMIAIPLVAFVIGPE. Topologically, residues 375-395 are extracellular; that stretch reads YFATKHGETDPRKRMSDPEAR. The helical transmembrane segment at 396 to 418 threads the bilayer; it reads VAGNLFTFWEFEGYLKYSPMFYG. The Cytoplasmic portion of the chain corresponds to 419–432; the sequence is YYSSTSGISTSGYK. The chain crosses the membrane as a helical span at residues 433 to 453; the sequence is LPLAYFLTAVLVYIYSFVATL. Residues 454 to 526 lie on the Extracellular side of the membrane; it reads RKMAENSRNS…NRNWRVILQR (73 aa). A helical membrane pass occupies residues 527 to 547; that stretch reads ILVNILVMGLLGLSGATVVLL. Topologically, residues 548–567 are cytoplasmic; that stretch reads VNHSEDLAKHDNWLSRNAVN. A helical membrane pass occupies residues 568–588; the sequence is VTMTLLSFFLPMIFEALGLFE. Over 589-599 the chain is Extracellular; sequence NWHPRQQLRLQ. Residues 600–620 form a helical membrane-spanning segment; it reads LARIMILNMLNLYSLMFSFIY. At 621–1308 the chain is on the cytoplasmic side; it reads KINSKEKPLQ…ILTLINNQGQ (688 aa). Disordered regions lie at residues 789–839, 860–967, 996–1027, 1066–1143, and 1186–1205; these read TTAT…TEAT, KPLG…TDQA, FFTSKYSRRHRNESAVSAGQPRETTESVNATP, LRGR…EGSE, and GSTTESPDSTTQSSDSKQLT. The span at 870-885 shows a compositional bias: polar residues; that stretch reads IPNSTTNSATLSTIPA. Over residues 886–906 the composition is skewed to low complexity; that stretch reads TLNTTNLPLNSTTKLTTTTST. A compositionally biased stretch (polar residues) spans 933 to 952; sequence TSDAPDNNSYSDITDYSSEP. A compositionally biased stretch (acidic residues) spans 953-967; sequence SEIEDFDEQESTDQA. Low complexity-rich tracts occupy residues 1069–1083, 1091–1100, and 1107–1130; these read RITTTTSTSTTSTTT, RTTTTELTST, and TTESSTDSSSPGSTTNAFDSSSST. Residues 1309–1329 traverse the membrane as a helical segment; the sequence is VWMGIFFSPGLVLINLVKLMI. Residues 1330–1358 lie on the Extracellular side of the membrane; that stretch reads MMYFRSWIVLTCNVPHEVVFKASKSNNFY. A helical membrane pass occupies residues 1359–1379; that stretch reads LSLLLTMLFLCVLPVGYAIVW. The Cytoplasmic portion of the chain corresponds to 1380–1423; the sequence is LRPSWHCGPFSEYNRIAEFITNTTRNALPKQLHEPLDYLTSSST. The chain crosses the membrane as a helical span at residues 1424–1444; sequence VIPLLLLLILIIYYLVSLTGA. Over 1445 to 2036 the chain is Extracellular; sequence LREANQDLRT…RIDIENEHEK (592 aa). Disordered regions lie at residues 1527-1572, 1592-1841, and 1859-1990; these read LRKG…SRLQ, ERAR…SRQG, and KKDD…IPTI. Basic and acidic residues-rich tracts occupy residues 1538 to 1566, 1614 to 1640, 1658 to 1668, 1727 to 1743, and 1777 to 1793; these read SFVRRDDDDTDTEHQDSLPHDEEAKDKRF, KETHPKSRFKVEKHERKDRGSMKDKKD, SPKDNEHDPDT, HIVDEKKPPPHEVEDKP, and PEPEVFKFDERSVERSS. Over residues 1806–1838 the composition is skewed to polar residues; sequence NEPSGTEEQDRSLPSPTPSQGQGHHQRQLSVLS. The span at 1890–1899 shows a compositional bias: low complexity; it reads VLSSVSSSTA. Pro residues predominate over residues 1903–1914; it reads PPTPEPESPTPS. Positions 1976-1990 are enriched in polar residues; the sequence is QDSQSSIWSDNIPTI.

The protein belongs to the TMC family. Expressed in multi-dendritic neurons of the labellum (md-L), which extend elaborate dendritic arbors innervating the bases of taste hairs (at protein level). In larvae, expressed in class I and class II dendritic arborization (da) neurons and bipolar dendrite (bd) neurons (at protein level). In adults, expressed in various sensory neurons including those in the mouth parts, olfactory neurons in the antenna, wing bristle neurons, haltere neurons, arista neurons, and many other sensory neurons, including a subset of chordotonal (Cho) neurons. Expressed in md-L axon terminals, including those that project into the subesophageal zone (SEZ). Also expressed in a small number of local neurons in the adult ventral nerve cord (VNC), and projections extending from a few neurons in the legs or wing hinges. In the adult mouth, expressed in a few multi-dendritic neurons of the ventral cibarial sensory organ (VCSO); the multiple elaborate dendritic branches form a brush-like structure that faces the luminal side of the food-passing tunnel. Also expressed in the oviduct and uterus of adult females.

The protein localises to the cell membrane. It localises to the cell projection. It is found in the dendrite. Functionally, probable ion channel. Component of mechanosensitive neurons that participates in proprioception, sensing food texture, and directing egg-laying site selection (oviposition). Component of multi-dendritic neurons of the labellum (md-L) where it is required for sensing the hardness and viscosity of their food, enabling them to behaviorally discriminate their preferred softness and smoothness from harder and stickier food options. Required as part of oviposition site selection process to relay mechanosensory and chemosensory information on the hardness and sweetness of potential egg-laying substrates, thus ensuring females select the most optimal site for their eggs survival. Females determine the softest substrate for their eggs first by making a coarse evaluation of substrate hardness using mechanosensitive channels nan and Piezo in the leg tarsal bristles, followed by a much finer assessment using nan, iav and Tmc mechanosensitive channels on the labellum. This protein is required to sense subtle differences in substrate stiffness (between 0.25% and 0.3% agarose), likely acting in the md-L neurons. Also required in neurons on the labellum, including the md-Ls, and possibly in the brain, to inhibit discrimination of egg-laying substrates of different hardness if the substrate contains sucrose. During oviposition evaluation, activation of sweet neurons by sucrose enhances the activity of the Tmc neurons resulting in females losing their softness preference in favor of egg-laying sites that contain sucrose. Acts in the larvae peripheral sensory neurons, to contribute to proprioception and sensory feedback for normal forward crawling behavior. Required for the normal activity of the proprioceptive sensory dendrites, ddaE which show preferential responses to forward locomotion, and ddaD which show preferential responses to backward locomotion. This chain is Transmembrane channel-like protein, found in Drosophila melanogaster (Fruit fly).